The following is a 492-amino-acid chain: 2-succinylbenzoate--CoA ligase (492 aa).

Belongs to the ATP-dependent AMP-binding enzyme family. MenE subfamily.

The enzyme catalyses 2-succinylbenzoate + ATP + CoA = 2-succinylbenzoyl-CoA + AMP + diphosphate. Its pathway is quinol/quinone metabolism; 1,4-dihydroxy-2-naphthoate biosynthesis; 1,4-dihydroxy-2-naphthoate from chorismate: step 5/7. The protein operates within quinol/quinone metabolism; menaquinone biosynthesis. Functionally, converts 2-succinylbenzoate (OSB) to 2-succinylbenzoyl-CoA (OSB-CoA). The polypeptide is 2-succinylbenzoate--CoA ligase (Geobacillus sp. (strain WCH70)).